The following is a 159-amino-acid chain: Transcriptional repressor NrdR (159 aa).

Residues Cys-3 to Cys-34 fold into a zinc finger. The ATP-cone domain occupies Ile-49–Asp-139.

This sequence belongs to the NrdR family. The cofactor is Zn(2+).

Negatively regulates transcription of bacterial ribonucleotide reductase nrd genes and operons by binding to NrdR-boxes. The polypeptide is Transcriptional repressor NrdR (Prochlorococcus marinus subsp. pastoris (strain CCMP1986 / NIES-2087 / MED4)).